The primary structure comprises 370 residues: NADH-quinone oxidoreductase subunit D 2 (370 aa).

The protein belongs to the complex I 49 kDa subunit family. NDH-1 is composed of 14 different subunits. Subunits NuoB, C, D, E, F, and G constitute the peripheral sector of the complex.

Its subcellular location is the cell membrane. It catalyses the reaction a quinone + NADH + 5 H(+)(in) = a quinol + NAD(+) + 4 H(+)(out). Functionally, NDH-1 shuttles electrons from NADH, via FMN and iron-sulfur (Fe-S) centers, to quinones in the respiratory chain. The immediate electron acceptor for the enzyme in this species is believed to be ubiquinone. Couples the redox reaction to proton translocation (for every two electrons transferred, four hydrogen ions are translocated across the cytoplasmic membrane), and thus conserves the redox energy in a proton gradient. The sequence is that of NADH-quinone oxidoreductase subunit D 2 from Herpetosiphon aurantiacus (strain ATCC 23779 / DSM 785 / 114-95).